A 110-amino-acid chain; its full sequence is Cytochrome bo(3) ubiquinol oxidase subunit 4 (110 aa).

Over 1–18 (MANAHDTHHEGNHGSVKS) the chain is Cytoplasmic. Residues 19–39 (YMIGFILSIILTAIPFGLAMS) traverse the membrane as a helical segment. Residues 40–46 (PSLPKNL) lie on the Periplasmic side of the membrane. A helical membrane pass occupies residues 47–67 (TVLIIVAMAVIQVVVHLVYFL). Topologically, residues 68–78 (HMDRSKEQRNN) are cytoplasmic. A helical membrane pass occupies residues 79-99 (VWTFLFTTLVIALLVGLSLWI). Residues 100–110 (MFSIHFEMLAK) are Periplasmic-facing.

Belongs to the cytochrome c oxidase bacterial subunit 4 family. Heterooctamer of two A chains, two B chains, two C chains and two D chains.

It is found in the cell inner membrane. Functionally, cytochrome bo(3) ubiquinol terminal oxidase is the component of the aerobic respiratory chain of E.coli that predominates when cells are grown at high aeration. Has proton pump activity across the membrane in addition to electron transfer, pumping 2 protons/electron. This is Cytochrome bo(3) ubiquinol oxidase subunit 4 (cyoD) from Pseudomonas putida (Arthrobacter siderocapsulatus).